The sequence spans 496 residues: Aminoacetaldehyde dehydrogenase (496 aa).

Positions 166, 168, 192, 246, 249, and 256 each coordinate NADH. Glu268 serves as the catalytic Proton acceptor. An NADH-binding site is contributed by Cys269. Cys303 (nucleophile) is an active-site residue. Positions 353 and 398 each coordinate NADH.

It belongs to the aldehyde dehydrogenase family. Homotetramer, formed by two symmetrical dimers.

The enzyme catalyses aminoacetaldehyde + NAD(+) + H2O = glycine + NADH + 2 H(+). The catalysed reaction is 3-aminopropanal + NAD(+) + H2O = beta-alanine + NADH + 2 H(+). Functionally, NAD(+)-dependent aminoaldehyde dehydrogenase highly efficient with protonated aminoacetaldehyde (ACTAL) and 3-aminopropanaldehyde (APAL). Likely participates in a still uncharacterized metabolic pathway present in proteobacteria species, in which ACTAL might be an intermediate, yielding glycine. Highly prefers NAD(+) over NADP(+). Shows very poor activity with acetaldehyde, propanaldehyde, butanaldehyde, pentanaldehyde, dimethylaminoacetaldehyde, trimethylaminoacetaldehyde (betaine aldehyde), trimethylaminobutanaldehyde, short aliphatic hydroxyaldehydes such as 3-hydroxypropanaldehyde and 2-hydroxypropanaldehyde (lactaldehyde), and aromatic aldehydes. The polypeptide is Aminoacetaldehyde dehydrogenase (Pseudomonas aeruginosa (strain ATCC 15692 / DSM 22644 / CIP 104116 / JCM 14847 / LMG 12228 / 1C / PRS 101 / PAO1)).